The following is a 380-amino-acid chain: Chaperone protein DnaJ (380 aa).

One can recognise a J domain in the interval Asp-6–Gly-71. The CR-type zinc finger occupies Gly-136–Glu-215. Cys-149, Cys-152, Cys-167, Cys-170, Cys-189, Cys-192, Cys-203, and Cys-206 together coordinate Zn(2+). 4 CXXCXGXG motif repeats span residues Cys-149–Gly-156, Cys-167–Gly-174, Cys-189–Gly-196, and Cys-203–Gly-210.

Belongs to the DnaJ family. As to quaternary structure, homodimer. The cofactor is Zn(2+).

Its subcellular location is the cytoplasm. Participates actively in the response to hyperosmotic and heat shock by preventing the aggregation of stress-denatured proteins and by disaggregating proteins, also in an autonomous, DnaK-independent fashion. Unfolded proteins bind initially to DnaJ; upon interaction with the DnaJ-bound protein, DnaK hydrolyzes its bound ATP, resulting in the formation of a stable complex. GrpE releases ADP from DnaK; ATP binding to DnaK triggers the release of the substrate protein, thus completing the reaction cycle. Several rounds of ATP-dependent interactions between DnaJ, DnaK and GrpE are required for fully efficient folding. Also involved, together with DnaK and GrpE, in the DNA replication of plasmids through activation of initiation proteins. The chain is Chaperone protein DnaJ from Acetobacter pasteurianus (strain NBRC 105184 / IFO 3283-01).